The following is a 128-amino-acid chain: Tachykinin-4 (128 aa).

The N-terminal stretch at 1–16 is a signal peptide; sequence MLPLLALLLLIGPSVC. Positions 17–54 are excised as a propeptide; the sequence is TTAGDREELAFGAEAESWVTVNLKGIPVPSIELKLQEL. Methionine 66 carries the methionine amide modification. Positions 69-128 are excised as a propeptide; that stretch reads RVGGYQLGRIVQDLLGTRGLSIEGTCRQAASQQRARPGAVTRESLQSREEDEAPLTTSNV. Residues 96 to 128 form a disordered region; it reads QAASQQRARPGAVTRESLQSREEDEAPLTTSNV.

Belongs to the tachykinin family. Expressed in hematopoietic cells with highest levels in pre- and pro-B cells but not in later developmental stages. Also detected in uterus, skeletal muscle, brain, spleen, stomach, skin and lactating mammary gland and in cells of myeloid lineage including dendritic and microglial cells and macrophages. In uterus, highest expression is observed in non-pregnant diestrus mice and in day 5 pregnant mice. Compared with mice in diestrus, decreases 2.6-fold in uteri from non-pregnant mice in estrus and 10.2-fold in day 17 pregnant mice. Detected at sites of chronic inflammation such as granulomas.

It is found in the secreted. Tachykinins are active peptides which excite neurons, evoke behavioral responses, are potent vasodilators and secretagogues, and contract (directly or indirectly) many smooth muscles. Hemokinin induces plasma extravasation, mast cell degranulation, muscle contraction, salivary secretion and scratching behavior. Increases sperm motility. Induces potent analgesic effects and may play a role in pain modulation. Promotes survival of bone marrow B lineage cells and of cultured LPS-stimulated pre-B cells and may act as an autocrine factor required for B-cell survival and proliferation. Lowers systemic arterial pressure following intravenous injection. Induces interferon-gamma production and may play a role in the inflammatory response. Shows potent affinity and specificity for the NK-1 receptor. This is Tachykinin-4 from Mus musculus (Mouse).